A 259-amino-acid polypeptide reads, in one-letter code: Protein unc-50 homolog B (259 aa).

The span at 1-11 (MLPTTSVSPRS) shows a compositional bias: polar residues. The interval 1–21 (MLPTTSVSPRSPDNGILSPRD) is disordered. The Cytoplasmic segment spans residues 1–82 (MLPTTSVSPR…TKDQWARDDP (82 aa)). Residues 83–103 (AFLVLLGIWLCVSTVGFGFVL) traverse the membrane as a helical segment. Topologically, residues 104-109 (DMSFFE) are lumenal. The helical transmembrane segment at 110–130 (TFTLLLWVVFIDCVGVGLLIA) threads the bilayer. Topologically, residues 131–158 (TSMWFVSNKYMVNRQGKDYDVEWGYTFD) are cytoplasmic. Residues 159–179 (VHLNAFYPLLVILHFIQLFFI) form a helical membrane-spanning segment. Over 180–181 (NH) the chain is Lumenal. A helical transmembrane segment spans residues 182-202 (VILTGWFIGCFVGNTLWLIAI). Over 203–222 (GYYIYITFLGYSALPFLKNT) the chain is Cytoplasmic. The chain crosses the membrane as a helical span at residues 223-243 (VVLLYPFAALALLYILSLALG). Residues 244-259 (WNFTAKLCLFYKYRVR) lie on the Lumenal side of the membrane.

It belongs to the unc-50 family.

Its subcellular location is the nucleus inner membrane. The protein localises to the golgi apparatus membrane. Functionally, involved in the cell surface expression of neuronal nicotinic receptors. Binds RNA. The sequence is that of Protein unc-50 homolog B (unc50-b) from Xenopus laevis (African clawed frog).